The following is a 722-amino-acid chain: Polyribonucleotide nucleotidyltransferase (722 aa).

Mg(2+) is bound by residues Asp487 and Asp493. One can recognise a KH domain in the interval 554–613 (PRMVSFKIHPDKIREVIGKGGATIQALTKETGCSIDIKDDGTVTIASTSAEGMAEAKARI). Positions 623–691 (GKIYEGPVVK…ERGRLRLSLK (69 aa)) constitute an S1 motif domain.

The protein belongs to the polyribonucleotide nucleotidyltransferase family. It depends on Mg(2+) as a cofactor.

The protein resides in the cytoplasm. It carries out the reaction RNA(n+1) + phosphate = RNA(n) + a ribonucleoside 5'-diphosphate. Its function is as follows. Involved in mRNA degradation. Catalyzes the phosphorolysis of single-stranded polyribonucleotides processively in the 3'- to 5'-direction. This Polynucleobacter necessarius subsp. necessarius (strain STIR1) protein is Polyribonucleotide nucleotidyltransferase.